Here is a 192-residue protein sequence, read N- to C-terminus: Small ribosomal subunit protein uS5 (192 aa).

Residues 20 to 83 (FVDRLVHINR…EAAKRGLIRV (64 aa)) enclose the S5 DRBM domain. The tract at residues 165–192 (ARRGLKVSALQARRRDAEPGSADSADAA) is disordered.

It belongs to the universal ribosomal protein uS5 family. Part of the 30S ribosomal subunit. Contacts proteins S4 and S8.

With S4 and S12 plays an important role in translational accuracy. Functionally, located at the back of the 30S subunit body where it stabilizes the conformation of the head with respect to the body. The polypeptide is Small ribosomal subunit protein uS5 (Methylobacterium sp. (strain 4-46)).